The following is a 368-amino-acid chain: uncharacterized protein (368 aa).

Belongs to the CdaR family.

This is an uncharacterized protein from Bacillus subtilis (strain 168).